The chain runs to 331 residues: MSLDPVKKLVILAKSNIMQSNNMDALEAIRIKFLGKKGYLNQHIKNLNDTSLDIKPKLGAAINQAKEDIYTLLIERKNILQSKNIKNTLITDTLDVTLPGRLSDIGTHHPITSTIKRMKIFFNTLGFSVIHGPEIEDDYFNFDALNIPKYHPSRDEHDTFWFDEKRLLRTHTSGVQIRAMINKTPPIRIISFGRVYRKDYDQHHTPMFHQMEGLIVDSNVNFSYLKKILYDFLYNFFETDIILRFRPSYFPFTEPSAEIDVMKKQETGNWLELLGCGMVHPKILHHVDIDTEKFSGFAFGIGIERLTMLQYNIDDIRVFFKNDLQFLDQFK.

Position 254 (E254) interacts with Mg(2+).

Belongs to the class-II aminoacyl-tRNA synthetase family. Phe-tRNA synthetase alpha subunit type 1 subfamily. As to quaternary structure, tetramer of two alpha and two beta subunits. Mg(2+) serves as cofactor.

It localises to the cytoplasm. The enzyme catalyses tRNA(Phe) + L-phenylalanine + ATP = L-phenylalanyl-tRNA(Phe) + AMP + diphosphate + H(+). The chain is Phenylalanine--tRNA ligase alpha subunit from Blochmanniella pennsylvanica (strain BPEN).